The sequence spans 185 residues: uncharacterized protein (185 aa).

This is an uncharacterized protein from Escherichia coli (strain K12).